Reading from the N-terminus, the 205-residue chain is Protein GrpE (205 aa).

It belongs to the GrpE family. As to quaternary structure, homodimer.

It localises to the cytoplasm. Functionally, participates actively in the response to hyperosmotic and heat shock by preventing the aggregation of stress-denatured proteins, in association with DnaK and GrpE. It is the nucleotide exchange factor for DnaK and may function as a thermosensor. Unfolded proteins bind initially to DnaJ; upon interaction with the DnaJ-bound protein, DnaK hydrolyzes its bound ATP, resulting in the formation of a stable complex. GrpE releases ADP from DnaK; ATP binding to DnaK triggers the release of the substrate protein, thus completing the reaction cycle. Several rounds of ATP-dependent interactions between DnaJ, DnaK and GrpE are required for fully efficient folding. This Shewanella loihica (strain ATCC BAA-1088 / PV-4) protein is Protein GrpE.